We begin with the raw amino-acid sequence, 415 residues long: Gamma-glutamyl phosphate reductase (415 aa).

It belongs to the gamma-glutamyl phosphate reductase family.

The protein resides in the cytoplasm. It catalyses the reaction L-glutamate 5-semialdehyde + phosphate + NADP(+) = L-glutamyl 5-phosphate + NADPH + H(+). It functions in the pathway amino-acid biosynthesis; L-proline biosynthesis; L-glutamate 5-semialdehyde from L-glutamate: step 2/2. Catalyzes the NADPH-dependent reduction of L-glutamate 5-phosphate into L-glutamate 5-semialdehyde and phosphate. The product spontaneously undergoes cyclization to form 1-pyrroline-5-carboxylate. This is Gamma-glutamyl phosphate reductase from Bacillus cereus (strain AH187).